The sequence spans 151 residues: HTH-type transcriptional regulator FL11 (151 aa).

The HTH asnC-type domain maps to 5-66 (LDEIDKKIIK…IIDPEALGYS (62 aa)). A DNA-binding region (H-T-H motif) is located at residues 24-43 (LREISKITGLAESTIHERIR). Residue 98–104 (ETTGDYD) coordinates L-arginine. L-lysine is bound by residues Asn118, Asp122, and 133-135 (THT). Residues Asp122 and 133 to 135 (THT) contribute to the L-arginine site.

Homodimer. Binds DNA as a dimer and an octamer. The octamer formed with lysine is stable in solution, but the octamer formed with arginine is unstable without DNA. When crystallized in the absence of DNA, dimers are assembled into helical cylinders with six dimers per turn. In solution, predominantly behaves as a dimer.

With respect to regulation, in the famine mode, FL11 forms dimers and acts as a repressor, leading to growth arrest. In the feast mode, in the presence of high concentrations of lysine or arginine, four dimers assemble into an octamer and cover the fl11 and lysine biosynthesis promoters. This leads to the inhibition of fl11 expression and lysine biosynthesis, decrease of the FL11 concentration in the cell, derepression of the target genes and activation of the metabolism. Functionally, DNA-binding protein involved in the repression of transcription of a large number of genes, thereby arresting growth, in response to environmental changes. Binding sites are identified in promoters of approximately 200 transcription units, including genes involved in ATP synthesis, transmembrane transport, translation and DNA synthesis. The sequence is that of HTH-type transcriptional regulator FL11 from Pyrococcus horikoshii (strain ATCC 700860 / DSM 12428 / JCM 9974 / NBRC 100139 / OT-3).